Here is a 429-residue protein sequence, read N- to C-terminus: Formate-dependent phosphoribosylglycinamide formyltransferase (429 aa).

Residues 26-27 (EL) and glutamate 86 contribute to the N(1)-(5-phospho-beta-D-ribosyl)glycinamide site. ATP contacts are provided by residues arginine 118, lysine 159, 199-202 (EEHI), and glutamate 207. The 197-residue stretch at 123–319 (ETLAREAKVP…EFGLHLRAVL (197 aa)) folds into the ATP-grasp domain. Residues glutamate 276 and glutamate 288 each coordinate Mg(2+). N(1)-(5-phospho-beta-D-ribosyl)glycinamide is bound by residues aspartate 295, lysine 375, and 382–383 (RR).

This sequence belongs to the PurK/PurT family. As to quaternary structure, homodimer.

It carries out the reaction N(1)-(5-phospho-beta-D-ribosyl)glycinamide + formate + ATP = N(2)-formyl-N(1)-(5-phospho-beta-D-ribosyl)glycinamide + ADP + phosphate + H(+). Its pathway is purine metabolism; IMP biosynthesis via de novo pathway; N(2)-formyl-N(1)-(5-phospho-D-ribosyl)glycinamide from N(1)-(5-phospho-D-ribosyl)glycinamide (formate route): step 1/1. Involved in the de novo purine biosynthesis. Catalyzes the transfer of formate to 5-phospho-ribosyl-glycinamide (GAR), producing 5-phospho-ribosyl-N-formylglycinamide (FGAR). Formate is provided by PurU via hydrolysis of 10-formyl-tetrahydrofolate. The protein is Formate-dependent phosphoribosylglycinamide formyltransferase of Thermococcus kodakarensis (strain ATCC BAA-918 / JCM 12380 / KOD1) (Pyrococcus kodakaraensis (strain KOD1)).